Reading from the N-terminus, the 462-residue chain is Phosphoglucosamine mutase (462 aa).

Catalysis depends on serine 112, which acts as the Phosphoserine intermediate. Serine 112, aspartate 250, aspartate 252, and aspartate 254 together coordinate Mg(2+). Residue serine 112 is modified to Phosphoserine.

This sequence belongs to the phosphohexose mutase family. Mg(2+) is required as a cofactor. In terms of processing, activated by phosphorylation.

The catalysed reaction is alpha-D-glucosamine 1-phosphate = D-glucosamine 6-phosphate. Its function is as follows. Catalyzes the conversion of glucosamine-6-phosphate to glucosamine-1-phosphate. This chain is Phosphoglucosamine mutase, found in Parasynechococcus marenigrum (strain WH8102).